The chain runs to 89 residues: Small ribosomal subunit protein bS16 (89 aa).

Belongs to the bacterial ribosomal protein bS16 family.

This is Small ribosomal subunit protein bS16 from Gloeobacter violaceus (strain ATCC 29082 / PCC 7421).